The following is a 261-amino-acid chain: tRNA pseudouridine synthase A (261 aa).

Asp-51 acts as the Nucleophile in catalysis. A substrate-binding site is contributed by Tyr-109.

Belongs to the tRNA pseudouridine synthase TruA family. As to quaternary structure, homodimer.

The catalysed reaction is uridine(38/39/40) in tRNA = pseudouridine(38/39/40) in tRNA. Functionally, formation of pseudouridine at positions 38, 39 and 40 in the anticodon stem and loop of transfer RNAs. This Shewanella baltica (strain OS185) protein is tRNA pseudouridine synthase A.